The following is a 48-amino-acid chain: Toxin CSTX-15 (48 aa).

Cystine bridges form between Cys3/Cys18, Cys10/Cys27, Cys17/Cys42, and Cys29/Cys40.

It belongs to the neurotoxin 19 (CSTX) family. 12 subfamily. In terms of assembly, heterodimer of A and B chains; disulfide-linked. In terms of processing, contains 4 disulfide bonds. As to expression, expressed by the venom gland.

Its subcellular location is the secreted. This is Toxin CSTX-15 from Cupiennius salei (American wandering spider).